The sequence spans 723 residues: Fatty acid oxidation complex subunit alpha (723 aa).

Positions methionine 1–aspartate 189 are enoyl-CoA hydratase/isomerase. Aspartate 296 lines the substrate pocket. Residues serine 311–isoleucine 723 are 3-hydroxyacyl-CoA dehydrogenase. Residues methionine 325, aspartate 344, valine 401–glutamate 403, lysine 408, and serine 430 contribute to the NAD(+) site. Catalysis depends on histidine 451, which acts as the For 3-hydroxyacyl-CoA dehydrogenase activity. Asparagine 454 is a binding site for NAD(+). 2 residues coordinate substrate: asparagine 501 and tyrosine 661.

This sequence in the N-terminal section; belongs to the enoyl-CoA hydratase/isomerase family. The protein in the C-terminal section; belongs to the 3-hydroxyacyl-CoA dehydrogenase family. In terms of assembly, heterotetramer of two alpha chains (FadB) and two beta chains (FadA).

The catalysed reaction is a (3S)-3-hydroxyacyl-CoA + NAD(+) = a 3-oxoacyl-CoA + NADH + H(+). It carries out the reaction a (3S)-3-hydroxyacyl-CoA = a (2E)-enoyl-CoA + H2O. The enzyme catalyses a 4-saturated-(3S)-3-hydroxyacyl-CoA = a (3E)-enoyl-CoA + H2O. It catalyses the reaction (3S)-3-hydroxybutanoyl-CoA = (3R)-3-hydroxybutanoyl-CoA. The catalysed reaction is a (3Z)-enoyl-CoA = a 4-saturated (2E)-enoyl-CoA. It carries out the reaction a (3E)-enoyl-CoA = a 4-saturated (2E)-enoyl-CoA. Its pathway is lipid metabolism; fatty acid beta-oxidation. Involved in the aerobic and anaerobic degradation of long-chain fatty acids via beta-oxidation cycle. Catalyzes the formation of 3-oxoacyl-CoA from enoyl-CoA via L-3-hydroxyacyl-CoA. It can also use D-3-hydroxyacyl-CoA and cis-3-enoyl-CoA as substrate. In Vibrio campbellii (strain ATCC BAA-1116), this protein is Fatty acid oxidation complex subunit alpha.